The following is a 386-amino-acid chain: Lysophosphatidylserine lipase ABHD12 (386 aa).

Residues 1–66 (MRKRAEPVPP…YGLWSRLRMF (66 aa)) lie on the Cytoplasmic side of the membrane. Residues 67–87 (LIFLLGLYIAIPFLVKICPAI) traverse the membrane as a helical segment. Over 88–386 (QTQLVFLNLV…RDFLGNTEQQ (299 aa)) the chain is Extracellular. Asn114 carries N-linked (GlcNAc...) asparagine glycosylation. Ser237 functions as the Nucleophile in the catalytic mechanism. Active-site charge relay system residues include Asp324 and His363.

It belongs to the serine esterase family.

It localises to the endoplasmic reticulum membrane. It carries out the reaction 1-(9Z-octadecenoyl)-sn-glycero-3-phospho-L-serine + H2O = sn-glycero-3-phospho-L-serine + (9Z)-octadecenoate + H(+). It catalyses the reaction 1-(9Z-octadecenoyl)-sn-glycero-3-phospho-(1'-sn-glycerol) + H2O = sn-glycero-3-phospho-(1'-sn-glycerol) + (9Z)-octadecenoate + H(+). The enzyme catalyses 1-(9Z-octadecenoyl)-sn-glycero-3-phospho-(1D-myo-inositol) + H2O = sn-glycero-3-phospho-1D-myo-inositol + (9Z)-octadecenoate + H(+). The catalysed reaction is 1-(9Z-octadecenoyl)-sn-glycero-3-phosphoethanolamine + H2O = sn-glycero-3-phosphoethanolamine + (9Z)-octadecenoate + H(+). It carries out the reaction 1-(9Z-octadecenoyl)-sn-glycero-3-phosphocholine + H2O = 1-(9Z-octadecenoyl)-sn-glycerol + phosphocholine + H(+). It catalyses the reaction 2-(9Z-octadecenoyl)-glycerol + H2O = glycerol + (9Z)-octadecenoate + H(+). The enzyme catalyses 1-hexadecanoyl-sn-glycero-3-phospho-L-serine + H2O = sn-glycero-3-phospho-L-serine + hexadecanoate + H(+). The catalysed reaction is 2-(5Z,8Z,11Z,14Z-eicosatetraenoyl)-glycerol + H2O = glycerol + (5Z,8Z,11Z,14Z)-eicosatetraenoate + H(+). It carries out the reaction Hydrolyzes glycerol monoesters of long-chain fatty acids.. It catalyses the reaction 1-decanoylglycerol + H2O = decanoate + glycerol + H(+). The enzyme catalyses 1-dodecanoylglycerol + H2O = dodecanoate + glycerol + H(+). The catalysed reaction is 1-tetradecanoylglycerol + H2O = tetradecanoate + glycerol + H(+). It carries out the reaction 2-hexadecanoylglycerol + H2O = glycerol + hexadecanoate + H(+). It catalyses the reaction 1-(9Z-octadecenoyl)-glycerol + H2O = glycerol + (9Z)-octadecenoate + H(+). The enzyme catalyses 2-(9Z,12Z-octadecadienoyl)-glycerol + H2O = (9Z,12Z)-octadecadienoate + glycerol + H(+). The catalysed reaction is 1-(5Z,8Z,11Z,14Z-eicosatetraenoyl)-glycerol + H2O = glycerol + (5Z,8Z,11Z,14Z)-eicosatetraenoate + H(+). It carries out the reaction 1-(9Z,12Z-octadecadienoyl)-glycerol + H2O = (9Z,12Z)-octadecadienoate + glycerol + H(+). It catalyses the reaction 1-hexadecanoylglycerol + H2O = glycerol + hexadecanoate + H(+). The enzyme catalyses 1-octadecanoylglycerol + H2O = octadecanoate + glycerol + H(+). The catalysed reaction is 1-octadecanoyl-2-(9,10-epoxyoctadecanoyl)-sn-glycero-3-phospho-L-serine + H2O = 9,10-epoxyoctadecanoate + 1-octadecanoyl-sn-glycero-3-phosphoserine + H(+). It carries out the reaction 1-octadecanoyl-2-(10-hydroxyoctadecanoyl)-sn-glycero-3-phospho-L-serine + H2O = 1-octadecanoyl-sn-glycero-3-phosphoserine + 10-hydroxyoctadecanoate + H(+). It catalyses the reaction 1-hexadecanoyl-2-(10-hydroxyoctadecanoyl)-sn-glycero-3-phospho-L-serine + H2O = 10-hydroxyoctadecanoate + 1-hexadecanoyl-sn-glycero-3-phospho-L-serine + H(+). Functionally, lysophosphatidylserine (LPS) lipase that mediates the hydrolysis of lysophosphatidylserine, a class of signaling lipids that regulates immunological and neurological processes. Represents a major lysophosphatidylserine lipase in the brain, thereby playing a key role in the central nervous system. Also able to hydrolyze oxidized phosphatidylserine; oxidized phosphatidylserine is produced in response to severe inflammatory stress and constitutes a proapoptotic 'eat me' signal. Also has monoacylglycerol (MAG) lipase activity: hydrolyzes 2-arachidonoylglycerol (2-AG), thereby acting as a regulator of endocannabinoid signaling pathways. Has a strong preference for very-long-chain lipid substrates; substrate specificity is likely due to improved catalysis and not improved substrate binding. The polypeptide is Lysophosphatidylserine lipase ABHD12 (Xenopus tropicalis (Western clawed frog)).